Reading from the N-terminus, the 72-residue chain is Translation initiation factor IF-1 1 (72 aa).

The 72-residue stretch at 1 to 72 (MSKDDVIQMA…TRARIIFRAK (72 aa)) folds into the S1-like domain.

This sequence belongs to the IF-1 family. Component of the 30S ribosomal translation pre-initiation complex which assembles on the 30S ribosome in the order IF-2 and IF-3, IF-1 and N-formylmethionyl-tRNA(fMet); mRNA recruitment can occur at any time during PIC assembly.

It localises to the cytoplasm. Its function is as follows. One of the essential components for the initiation of protein synthesis. Stabilizes the binding of IF-2 and IF-3 on the 30S subunit to which N-formylmethionyl-tRNA(fMet) subsequently binds. Helps modulate mRNA selection, yielding the 30S pre-initiation complex (PIC). Upon addition of the 50S ribosomal subunit IF-1, IF-2 and IF-3 are released leaving the mature 70S translation initiation complex. This Polynucleobacter asymbioticus (strain DSM 18221 / CIP 109841 / QLW-P1DMWA-1) (Polynucleobacter necessarius subsp. asymbioticus) protein is Translation initiation factor IF-1 1.